The chain runs to 156 residues: Zinc finger SWIM domain-containing protein 7 homolog (156 aa).

Residues 82–120 (YMCLIQGDYCSCPSFNFSVLLKSDSVYCKHQISSILAEI) form an SWIM-type zinc finger.

Belongs to the SWS1 family.

Its subcellular location is the nucleus. May be involved in the homologous recombination repair (HRR) pathway of double-stranded DNA breaks arising during DNA replication or induced by DNA-damaging agents. In Dictyostelium discoideum (Social amoeba), this protein is Zinc finger SWIM domain-containing protein 7 homolog (zswim7).